A 510-amino-acid polypeptide reads, in one-letter code: Serine/threonine protein phosphatase 2A 59 kDa regulatory subunit B' eta isoform (510 aa).

The disordered stretch occupies residues 1–87 (MWKQILSKLP…NNNNNNNNGV (87 aa)). Residues 10 to 19 (PNKKSSKHEH) are compositionally biased toward basic residues. Over residues 27–42 (HSSSSSHTSGASTSKS) the composition is skewed to low complexity.

It belongs to the phosphatase 2A regulatory subunit B56 family. As to quaternary structure, PP2A consists of a common heteromeric enzyme, composed of a catalytic subunit (subunits C), a constant regulatory subunit (subunit A), and a variety of regulatory subunits such as subunits B (the R2/B/PR55/B55, R3/B''/PR72/PR130/PR59 and R5/B'/B56 families). Interacts with BZR1. Interacts with BRI1.

It localises to the nucleus. The protein localises to the nucleolus. The protein resides in the cytoplasm. Its function is as follows. The B regulatory subunit may modulate substrate selectivity and catalytic activity, and may also direct the localization of the catalytic enzyme to a particular subcellular compartment. The holoenzyme composed of PP2AA1, PP2A4 and B'ETA acts as negative regulator of plant innate immunity by controlling BAK1 phosphorylation state and activation in surface-localized immune receptor complexes. Required for the formation of the PP2A holoenzyme that negatively regulates brassinosteroid signaling by dephosphorylating and inactivating BRI1 in the cytoplasm. The chain is Serine/threonine protein phosphatase 2A 59 kDa regulatory subunit B' eta isoform (B'ETA) from Arabidopsis thaliana (Mouse-ear cress).